Consider the following 239-residue polypeptide: Ribonuclease P protein component 3 (239 aa).

The protein belongs to the eukaryotic/archaeal RNase P protein component 3 family. Consists of a catalytic RNA component and at least 4-5 protein subunits.

It localises to the cytoplasm. It catalyses the reaction Endonucleolytic cleavage of RNA, removing 5'-extranucleotides from tRNA precursor.. Functionally, part of ribonuclease P, a protein complex that generates mature tRNA molecules by cleaving their 5'-ends. The chain is Ribonuclease P protein component 3 from Methanosarcina barkeri (strain Fusaro / DSM 804).